Consider the following 217-residue polypeptide: Phosphatidylinositol phosphate synthase (217 aa).

Helical transmembrane passes span 28–49 and 55–74; these read LTPD…LTLF and FAGA…DGAM. 31-34 serves as a coordination point for a CDP-1,2-diacyl-sn-glycerol; it reads DVVT. Mg(2+)-binding residues include Asp-68 and Asp-71. A CDP-1,2-diacyl-sn-glycerol-binding residues include Gly-72, Arg-76, and Thr-82. Asp-89 and Asp-93 together coordinate Mg(2+). The Proton acceptor role is filled by Asp-93. The next 4 helical transmembrane spans lie at 95 to 112, 118 to 136, 156 to 173, and 179 to 200; these read ISDG…AFHM, VIAT…YIKA, LIIV…FVPW, and VGMW…HTVW.

It belongs to the CDP-alcohol phosphatidyltransferase class-I family. In terms of assembly, homodimer. It depends on Mg(2+) as a cofactor.

The protein resides in the cell membrane. The catalysed reaction is a CDP-1,2-diacyl-sn-glycerol + 1D-myo-inositol 3-phosphate = a 1,2-diacyl-sn-glycero-3-phospho-(1D-myo-inositol-3-phosphate) + CMP + H(+). It carries out the reaction 1,2-di-(9Z-octadecenoyl)-sn-glycero-3-cytidine-5'-diphosphate + 1D-myo-inositol 3-phosphate = 1,2-di-(9Z-octadecenoyl)-sn-glycero-3-phospho-(1D-myo-inositol-3-phosphate) + CMP + H(+). The protein operates within phospholipid metabolism; phosphatidylinositol phosphate biosynthesis. With respect to regulation, competitively inhibited by several inositol 1-phosphate analogs, including the phosphonate analog 1-deoxy-1-phosphonomethyl-myo-inositol (Ino-C-P). In terms of biological role, catalyzes the conjugation of the 1'-hydroxyl group of D-myo-inositol-3-phosphate (also named L-myo-inositol-1-phosphate) with a lipid tail of cytidine diphosphate diacylglycerol (CDP-DAG), forming phosphatidylinositol phosphate (PIP) and CMP. PIP is a precursor of phosphatidylinositol (PI) which is an essential lipid for mycobacteria required for formation of their cell wall. This is Phosphatidylinositol phosphate synthase from Mycobacterium bovis (strain BCG / Pasteur 1173P2).